The sequence spans 485 residues: Glutamyl-tRNA(Gln) amidotransferase subunit A (485 aa).

Residues Lys78 and Ser153 each act as charge relay system in the active site. The active-site Acyl-ester intermediate is the Ser177.

Belongs to the amidase family. GatA subfamily. As to quaternary structure, heterotrimer of A, B and C subunits.

The enzyme catalyses L-glutamyl-tRNA(Gln) + L-glutamine + ATP + H2O = L-glutaminyl-tRNA(Gln) + L-glutamate + ADP + phosphate + H(+). In terms of biological role, allows the formation of correctly charged Gln-tRNA(Gln) through the transamidation of misacylated Glu-tRNA(Gln) in organisms which lack glutaminyl-tRNA synthetase. The reaction takes place in the presence of glutamine and ATP through an activated gamma-phospho-Glu-tRNA(Gln). The polypeptide is Glutamyl-tRNA(Gln) amidotransferase subunit A (Bacillus cereus (strain ATCC 14579 / DSM 31 / CCUG 7414 / JCM 2152 / NBRC 15305 / NCIMB 9373 / NCTC 2599 / NRRL B-3711)).